We begin with the raw amino-acid sequence, 994 residues long: Leucine-rich repeat receptor-like kinase protein FLORAL ORGAN NUMBER1 (994 aa).

The N-terminal stretch at 1–17 (MPPTLLLLLLLLPPSLA) is a signal peptide. LRR repeat units follow at residues 73-93 (AINL…IALL), 94-117 (DSLA…LPTL), 118-141 (PSLR…DSGG), 147-171 (FPSL…SASH), 172-194 (ARLR…SYGD), 195-219 (LAAL…LSRL), 244-268 (LGAL…LGRL), 269-292 (QRLD…LGDL), 293-316 (SSLA…LANL), 318-340 (NLKL…VAGF), 341-364 (AQLE…LGKN), 365-388 (GRLK…LCAG), 390-412 (RLEM…LGDC), 413-436 (KTLT…LFNL), 438-459 (QANM…VIGG), 460-483 (DKIG…IGNL), 484-507 (PALQ…IGNL), 509-531 (NLSR…LIRC), 533-555 (SLAA…ITSL), 556-579 (KILC…MSNM), and 581-604 (SLTT…QFLV). 5 N-linked (GlcNAc...) asparagine glycosylation sites follow: asparagine 75, asparagine 98, asparagine 124, asparagine 129, and asparagine 159. An N-linked (GlcNAc...) asparagine glycan is attached at asparagine 256. N-linked (GlcNAc...) asparagine glycosylation is present at asparagine 315. Asparagine 352 is a glycosylation site (N-linked (GlcNAc...) asparagine). 3 N-linked (GlcNAc...) asparagine glycosylation sites follow: asparagine 495, asparagine 509, and asparagine 514. Residues asparagine 562 and asparagine 578 are each glycosylated (N-linked (GlcNAc...) asparagine). N-linked (GlcNAc...) asparagine glycosylation is present at asparagine 606. Residues 647–667 (KKMLVALVAAFAAVAVAFLGA) form a helical membrane-spanning segment. Residues 704–978 (VKEDNIIGKG…TMREVVHMLS (275 aa)) enclose the Protein kinase domain. ATP-binding positions include 710 to 718 (IGKGGAGIV) and lysine 731. Catalysis depends on aspartate 828, which acts as the Proton acceptor.

The protein belongs to the protein kinase superfamily. Ser/Thr protein kinase family. In terms of tissue distribution, expressed in shoot apical meristem, and after transition to the reproductive phase, detected in the inflorescence and the floral meristems. Expressed uniformly throughout the meristems. Expressed also in floral organ primordia, such as the palea, lemma, lodicules, stamens, carpels and ovules.

Its subcellular location is the membrane. It carries out the reaction L-seryl-[protein] + ATP = O-phospho-L-seryl-[protein] + ADP + H(+). It catalyses the reaction L-threonyl-[protein] + ATP = O-phospho-L-threonyl-[protein] + ADP + H(+). Receptor-like kinase protein that regulates the size of the floral meristem. This chain is Leucine-rich repeat receptor-like kinase protein FLORAL ORGAN NUMBER1 (FON1), found in Oryza sativa subsp. japonica (Rice).